The primary structure comprises 377 residues: tRNA-specific 2-thiouridylase MnmA (377 aa).

Residues 12-19 (GMSGGVDS) and M38 contribute to the ATP site. Residues 98–100 (NPD) are interaction with target base in tRNA. The active-site Nucleophile is the C103. The cysteines at positions 103 and 200 are disulfide-linked. G127 is a binding site for ATP. The interval 150 to 152 (KDQ) is interaction with tRNA. C200 serves as the catalytic Cysteine persulfide intermediate. The tract at residues 314 to 315 (RY) is interaction with tRNA.

The protein belongs to the MnmA/TRMU family.

It is found in the cytoplasm. It catalyses the reaction S-sulfanyl-L-cysteinyl-[protein] + uridine(34) in tRNA + AH2 + ATP = 2-thiouridine(34) in tRNA + L-cysteinyl-[protein] + A + AMP + diphosphate + H(+). In terms of biological role, catalyzes the 2-thiolation of uridine at the wobble position (U34) of tRNA, leading to the formation of s(2)U34. This is tRNA-specific 2-thiouridylase MnmA from Limosilactobacillus reuteri (strain DSM 20016) (Lactobacillus reuteri).